The sequence spans 261 residues: Fructoselysine 6-kinase (261 aa).

Belongs to the carbohydrate kinase PfkB family. As to quaternary structure, monomer.

It carries out the reaction N(6)-(D-fructosyl)-L-lysine + ATP = N(6)-(6-phospho-D-fructosyl)-L-lysine + ADP + H(+). The protein operates within carbohydrate metabolism; fructoselysine degradation; D-glucose 6-phosphate and lysine from fructoselysine: step 1/2. Functionally, catalyzes the ATP-dependent phosphorylation of fructoselysine to fructoselysine 6-phosphate. Functions in a fructoselysine degradation pathway that allows E.coli to grow on fructoselysine or psicoselysine. To a much lesser extenst, is also able to phosphorylate psicoselysine. The protein is Fructoselysine 6-kinase of Escherichia coli (strain K12).